Here is a 333-residue protein sequence, read N- to C-terminus: Ferredoxin--NADP reductase (333 aa).

FAD-binding residues include aspartate 32, glutamine 40, tyrosine 45, alanine 85, phenylalanine 119, aspartate 285, and threonine 326.

It belongs to the ferredoxin--NADP reductase type 2 family. As to quaternary structure, homodimer. The cofactor is FAD.

The enzyme catalyses 2 reduced [2Fe-2S]-[ferredoxin] + NADP(+) + H(+) = 2 oxidized [2Fe-2S]-[ferredoxin] + NADPH. This chain is Ferredoxin--NADP reductase, found in Neorickettsia sennetsu (strain ATCC VR-367 / Miyayama) (Ehrlichia sennetsu).